We begin with the raw amino-acid sequence, 252 residues long: Large ribosomal subunit protein uL4 (252 aa).

It belongs to the universal ribosomal protein uL4 family. Part of the 50S ribosomal subunit.

In terms of biological role, one of the primary rRNA binding proteins, this protein initially binds near the 5'-end of the 23S rRNA. It is important during the early stages of 50S assembly. It makes multiple contacts with different domains of the 23S rRNA in the assembled 50S subunit and ribosome. Its function is as follows. Forms part of the polypeptide exit tunnel. This chain is Large ribosomal subunit protein uL4, found in Methanococcus maripaludis (strain DSM 14266 / JCM 13030 / NBRC 101832 / S2 / LL).